Reading from the N-terminus, the 1422-residue chain is Guanine nucleotide exchange factor subunit RIC1 (1422 aa).

WD repeat units follow at residues 64 to 103 (TQFGSYKQAEWRPDSTMIAVSTANGYILFFHITSSRGDKY) and 304 to 343 (NKTGAVKLIRWSPDNSAVIVTWEYGGLSLWSVFGAQLICT). 2 disordered regions span residues 442–462 (NPKYSSARAERMPRHEKSPFA) and 986–1005 (SGESETPPSTPTSQEPSSSG). The segment covering 449 to 460 (RAERMPRHEKSP) has biased composition (basic and acidic residues). A phosphothreonine mark is found at T991 and T995. Residues S1014, S1016, S1018, S1036, and S1171 each carry the phosphoserine modification. Residues 1021-1048 (AENVPPGKFGLQKTLSMPTGPSGKRWSK) are disordered. Disordered stretches follow at residues 1179-1198 (THRDTDRASSPGPQMQDAFL) and 1355-1422 (DTFQ…CSVS). The span at 1378–1396 (GSCSHGSISQSEPGSNNVV) shows a compositional bias: polar residues. A compositionally biased stretch (acidic residues) spans 1403–1412 (TTQADEEEPL).

Belongs to the RIC1 family. In terms of assembly, forms a complex with RGP1; the interaction enhances RAB6A GTPase activity. Interacts (via central domain) with RGP1. Interacts with RAB6A; the interaction is direct with a preference for RAB6A-GDP. Interacts (via C-terminus domain) with RAB33B; the interaction is direct with a preference for RAB33B-GTP. Interacts with GJA1. Expressed in the eye lens.

It localises to the cytoplasm. The protein resides in the cytosol. The protein localises to the membrane. In terms of biological role, the RIC1-RGP1 complex acts as a guanine nucleotide exchange factor (GEF), which activates RAB6A by exchanging bound GDP for free GTP, and may thereby be required for efficient fusion of endosome-derived vesicles with the Golgi compartment. The RIC1-RGP1 complex participates in the recycling of mannose-6-phosphate receptors. Required for phosphorylation and localization of GJA1. Is a regulator of procollagen transport and secretion, and is required for correct cartilage morphogenesis and development of the craniofacial skeleton. In Mus musculus (Mouse), this protein is Guanine nucleotide exchange factor subunit RIC1.